The sequence spans 181 residues: Protein Ves (181 aa).

Belongs to the Ves family.

This is Protein Ves from Cronobacter sakazakii (strain ATCC BAA-894) (Enterobacter sakazakii).